A 353-amino-acid chain; its full sequence is Rhodopsin (353 aa).

Topologically, residues 1–36 (MNGTEGENFYIPFSNKTGLARSPFEYPQYYLAEPWK) are extracellular. 2 N-linked (GlcNAc...) asparagine glycosylation sites follow: Asn-2 and Asn-15. A helical transmembrane segment spans residues 37–61 (YSVLAAYMFFLILVGFPVNFLTLFV). At 62 to 73 (TVQHKKLRTPLN) the chain is on the cytoplasmic side. A helical membrane pass occupies residues 74–96 (YILLNLAVANLFMVLFGFTLTMY). The Extracellular portion of the chain corresponds to 97-110 (SSMNGYFVFGPTMC). Cysteines 110 and 187 form a disulfide. The helical transmembrane segment at 111–133 (NFEGFFATLGGEMSLWSLVVLAI) threads the bilayer. The short motif at 134 to 136 (ERY) is the 'Ionic lock' involved in activated form stabilization element. Residues 134–152 (ERYIVICKPMGNFRFGSTH) are Cytoplasmic-facing. Residues 153 to 173 (AYMGVAFTWFMALSCAAPPLV) traverse the membrane as a helical segment. Topologically, residues 174 to 202 (GWSRYLPEGMQCSCGPDYYTLNPNFNNES) are extracellular. The helical transmembrane segment at 203 to 224 (FVIYMFLVHFIIPFIVIFFCYG) threads the bilayer. The Cytoplasmic segment spans residues 225–252 (RLLCTVKEAAAAQQESASTQKAEKEVTR). Residues 253 to 274 (MVVLMVIGFLVCWVPYASVAFY) form a helical membrane-spanning segment. At 275–286 (IFTHQGSDFGAT) the chain is on the extracellular side. Residues 287–308 (FMTVPAFFAKTSALYNPIIYIL) form a helical membrane-spanning segment. Residue Lys-296 is modified to N6-(retinylidene)lysine. Residues 309 to 353 (MNKQFRNCMITTLCCGKNPLGDEDSGASTSKTEVSSVSTSQVSPA) lie on the Cytoplasmic side of the membrane. Residues 330-353 (DEDSGASTSKTEVSSVSTSQVSPA) are disordered. Residues 336 to 353 (STSKTEVSSVSTSQVSPA) show a composition bias toward low complexity.

It belongs to the G-protein coupled receptor 1 family. Opsin subfamily. In terms of processing, phosphorylated on some or all of the serine and threonine residues present in the C-terminal region. Post-translationally, contains one covalently linked retinal chromophore.

Its subcellular location is the membrane. The protein localises to the cell projection. It localises to the cilium. The protein resides in the photoreceptor outer segment. Photoreceptor required for image-forming vision at low light intensity. While most salt water fish species use retinal as chromophore, most freshwater fish use 3-dehydroretinal, or a mixture of retinal and 3-dehydroretinal. Light-induced isomerization of 11-cis to all-trans retinal triggers a conformational change that activates signaling via G-proteins. Subsequent receptor phosphorylation mediates displacement of the bound G-protein alpha subunit by arrestin and terminates signaling. The sequence is that of Rhodopsin (RHO) from Petromyzon marinus (Sea lamprey).